The chain runs to 1482 residues: Glutamate receptor ionotropic, NMDA 2B (1482 aa).

A signal peptide spans 1-26 (MKPSAECCSPKFWLVLAVLAVSGSKA). Topologically, residues 27 to 557 (RSQKSPPSIG…SAFLEPFSAD (531 aa)) are extracellular. N-linked (GlcNAc...) asparagine glycosylation occurs at asparagine 74. An intrachain disulfide couples cysteine 86 to cysteine 321. Zn(2+) is bound by residues histidine 127 and glutamate 284. Residues asparagine 341, asparagine 348, asparagine 444, and asparagine 491 are each glycosylated (N-linked (GlcNAc...) asparagine). 2 disulfide bridges follow: cysteine 429-cysteine 456 and cysteine 436-cysteine 457. The L-glutamate site is built by threonine 514 and arginine 519. Asparagine 542 is a glycosylation site (N-linked (GlcNAc...) asparagine). A helical transmembrane segment spans residues 558-576 (VWVMMFVMLLIVSAVAVFV). The Cytoplasmic segment spans residues 577-603 (FEYFSPVGYNRCLADGREPGGPSFTIG). The segment at residues 604–623 (KAIWLLWGLVFNNSVPVQNP) is an intramembrane region (discontinuously helical). Positions 604 to 623 (KAIWLLWGLVFNNSVPVQNP) are pore-forming. Over 624 to 630 (KGTTSKI) the chain is Cytoplasmic. A helical membrane pass occupies residues 631 to 646 (MVSVWAFFAVIFLASY). At 647-817 (TANLAAFMIQ…VMSSQLDIDN (171 aa)) the chain is on the extracellular side. Asparagine 688 carries N-linked (GlcNAc...) asparagine glycosylation. Residues serine 690, threonine 691, and aspartate 732 each coordinate L-glutamate. The cysteines at positions 746 and 801 are disulfide-linked. The chain crosses the membrane as a helical span at residues 818 to 837 (MAGVFYMLGAAMALSLITFI). Residues 838–1482 (CEHLFYWQFR…EKLSSIESDV (645 aa)) lie on the Cytoplasmic side of the membrane. Residues serine 882, serine 886, serine 917, and serine 920 each carry the phosphoserine modification. Phosphotyrosine occurs at positions 962 and 1039. Phosphoserine occurs at positions 1058, 1061, and 1064. Residues tyrosine 1109 and tyrosine 1133 each carry the phosphotyrosine modification. Residue serine 1143 is modified to Phosphoserine. Position 1155 is a phosphotyrosine (tyrosine 1155). Residues 1161–1194 (DFKRDSVSGGGPCTNRSHLKHGTGEKHGVVGGVP) are disordered. 2 positions are modified to phosphoserine: serine 1255 and serine 1259. The disordered stretch occupies residues 1269 to 1301 (PVAVTSNASSTKYPQSPTNSKAQKKNRNKLRRQ). Residues 1272–1289 (VTSNASSTKYPQSPTNSK) are compositionally biased toward polar residues. The segment covering 1290 to 1301 (AQKKNRNKLRRQ) has biased composition (basic residues). The segment at 1292–1304 (KKNRNKLRRQHSY) is interaction with DAPK1. A Phosphoserine modification is found at serine 1303. Residue tyrosine 1472 is modified to Phosphotyrosine. The short motif at 1480-1482 (SDV) is the PDZ-binding element.

The protein belongs to the glutamate-gated ion channel (TC 1.A.10.1) family. NR2B/GRIN2B subfamily. In terms of assembly, heterotetramer. Forms heterotetrameric channels composed of two GluN1/zeta subunits (GRIN1), and two identical GluN2/epsilon subunits (GRIN2A, GRIN2B, GRIN2C or GRIN2D) or GluN3 subunits (GRIN3A or GRIN3B) (in vitro). Can also form heterotetrameric channels that contain at least two GluN1 subunits and at least two different GluN2 subunits (or a combination of one GluN2 and one GluN3 subunits) (in vitro). In vivo, the subunit composition may depend on the expression levels of the different subunits. Found in a complex with GRIN1, GRIN3A and PPP2CB. Found in a complex with GRIN1 and GRIN3B. Interacts with MAGI3. Interacts with HIP1 and NETO1. Interacts with PDZ domains of PATJ, DLG3 and DLG4. Interacts with DAPK1. Found in a complex with GRIN1 and PRR7. Interacts with PRR7. Interacts with CAMK2A. Interacts with ARC; preventing ARC oligomerization. Interacts with TMEM25. Interacts (via the extreme C-terminus) with FRMPD2 (via the second PDZ domain); the interaction is direct and is likely to promote NMDAR-mediated neural signal transmission. Interacts with FAM81A; the interaction facilitates condensate formation via liquid-liquid phase separation. Post-translationally, phosphorylated on tyrosine residues. Phosphorylation at Ser-1303 by DAPK1 enhances synaptic NMDA receptor channel activity. As to expression, expressed in the hippocampus including the dentate gyrus (at protein level). Detected in adult olfactory bulb, brain cortex, hippocampus, striatum, thalamus, superior colliculus, with much lower levels in inferior colliculus, midbrain and cerebellum.

The protein resides in the cell membrane. Its subcellular location is the postsynaptic cell membrane. It localises to the late endosome. The protein localises to the lysosome. It is found in the cytoplasm. The protein resides in the cytoskeleton. It carries out the reaction Ca(2+)(in) = Ca(2+)(out). The catalysed reaction is Na(+)(in) = Na(+)(out). The enzyme catalyses K(+)(in) = K(+)(out). With respect to regulation, NMDA glutamate receptor activity is inhibited by micromolar levels of zinc ions. NMDA glutamate receptor activity is inhibited by ifenprodil. Its function is as follows. Component of N-methyl-D-aspartate (NMDA) receptors (NMDARs) that function as heterotetrameric, ligand-gated cation channels with high calcium permeability and voltage-dependent block by Mg(2+). Participates in synaptic plasticity for learning and memory formation by contributing to the long-term depression (LTD) of hippocampus membrane currents. Channel activation requires binding of the neurotransmitter L-glutamate to the GluN2 subunit, glycine or D-serine binding to the GluN1 subunit, plus membrane depolarization to eliminate channel inhibition by Mg(2+). NMDARs mediate simultaneously the potasium efflux and the influx of calcium and sodium. Each GluN2 subunit confers differential attributes to channel properties, including activation, deactivation and desensitization kinetics, pH sensitivity, Ca2(+) permeability, and binding to allosteric modulators. In concert with DAPK1 at extrasynaptic sites, acts as a central mediator for stroke damage. Its phosphorylation at Ser-1303 by DAPK1 enhances synaptic NMDA receptor channel activity inducing injurious Ca2+ influx through them, resulting in an irreversible neuronal death. The polypeptide is Glutamate receptor ionotropic, NMDA 2B (Rattus norvegicus (Rat)).